The following is a 339-amino-acid chain: Phosphate acyltransferase (339 aa).

It belongs to the PlsX family. In terms of assembly, homodimer. Probably interacts with PlsY.

The protein resides in the cytoplasm. The enzyme catalyses a fatty acyl-[ACP] + phosphate = an acyl phosphate + holo-[ACP]. Its pathway is lipid metabolism; phospholipid metabolism. Catalyzes the reversible formation of acyl-phosphate (acyl-PO(4)) from acyl-[acyl-carrier-protein] (acyl-ACP). This enzyme utilizes acyl-ACP as fatty acyl donor, but not acyl-CoA. This chain is Phosphate acyltransferase, found in Aeromonas salmonicida (strain A449).